The chain runs to 256 residues: L-erythrulose-1-phosphate isomerase (256 aa).

Histidine 96 (electrophile) is an active-site residue. Glutamate 169 acts as the Proton acceptor in catalysis. The substrate site is built by glycine 175 and serine 212.

The protein belongs to the triosephosphate isomerase family. Homodimer.

Its subcellular location is the cytoplasm. The enzyme catalyses L-erythrulose 1-phosphate = D-erythrulose 4-phosphate. It functions in the pathway carbohydrate metabolism; erythritol degradation. Catalyzes the isomerization of D-erythrulose-4P to L-erythrulose-1P. Involved in the degradation pathway of erythritol, that allows B.abortus to grow on this compound as the sole carbon source. The sequence is that of L-erythrulose-1-phosphate isomerase from Brucella abortus (strain 2308).